The chain runs to 222 residues: Thymidylate kinase (222 aa).

10–17 contributes to the ATP binding site; the sequence is GLEGAGKS.

This sequence belongs to the thymidylate kinase family.

It catalyses the reaction dTMP + ATP = dTDP + ADP. Phosphorylation of dTMP to form dTDP in both de novo and salvage pathways of dTTP synthesis. The polypeptide is Thymidylate kinase (Alteromonas mediterranea (strain DSM 17117 / CIP 110805 / LMG 28347 / Deep ecotype)).